We begin with the raw amino-acid sequence, 880 residues long: Alanine--tRNA ligase (880 aa).

Residues His-567, His-571, Cys-669, and His-673 each contribute to the Zn(2+) site.

It belongs to the class-II aminoacyl-tRNA synthetase family. Zn(2+) serves as cofactor.

The protein resides in the cytoplasm. The catalysed reaction is tRNA(Ala) + L-alanine + ATP = L-alanyl-tRNA(Ala) + AMP + diphosphate. Functionally, catalyzes the attachment of alanine to tRNA(Ala) in a two-step reaction: alanine is first activated by ATP to form Ala-AMP and then transferred to the acceptor end of tRNA(Ala). Also edits incorrectly charged Ser-tRNA(Ala) and Gly-tRNA(Ala) via its editing domain. The polypeptide is Alanine--tRNA ligase (Syntrophomonas wolfei subsp. wolfei (strain DSM 2245B / Goettingen)).